Reading from the N-terminus, the 357-residue chain is Alanine racemase (357 aa).

Lys35 serves as the catalytic Proton acceptor; specific for D-alanine. Position 35 is an N6-(pyridoxal phosphate)lysine (Lys35). Arg131 provides a ligand contact to substrate. The active-site Proton acceptor; specific for L-alanine is the Tyr256. Substrate is bound at residue Met304.

It belongs to the alanine racemase family. Pyridoxal 5'-phosphate serves as cofactor.

The catalysed reaction is L-alanine = D-alanine. It participates in amino-acid biosynthesis; D-alanine biosynthesis; D-alanine from L-alanine: step 1/1. In terms of biological role, catalyzes the interconversion of L-alanine and D-alanine. May also act on other amino acids. In Legionella pneumophila (strain Corby), this protein is Alanine racemase (alr).